The primary structure comprises 561 residues: Dihydroxy-acid dehydratase (561 aa).

Cys-50 serves as a coordination point for [2Fe-2S] cluster. A Mg(2+)-binding site is contributed by Asp-82. A [2Fe-2S] cluster-binding site is contributed by Cys-123. Mg(2+) is bound by residues Asp-124 and Lys-125. Position 125 is an N6-carboxylysine (Lys-125). Residue Cys-195 participates in [2Fe-2S] cluster binding. A Mg(2+)-binding site is contributed by Glu-447. Ser-473 serves as the catalytic Proton acceptor.

The protein belongs to the IlvD/Edd family. In terms of assembly, homodimer. [2Fe-2S] cluster is required as a cofactor. It depends on Mg(2+) as a cofactor.

It carries out the reaction (2R)-2,3-dihydroxy-3-methylbutanoate = 3-methyl-2-oxobutanoate + H2O. It catalyses the reaction (2R,3R)-2,3-dihydroxy-3-methylpentanoate = (S)-3-methyl-2-oxopentanoate + H2O. It functions in the pathway amino-acid biosynthesis; L-isoleucine biosynthesis; L-isoleucine from 2-oxobutanoate: step 3/4. Its pathway is amino-acid biosynthesis; L-valine biosynthesis; L-valine from pyruvate: step 3/4. Functions in the biosynthesis of branched-chain amino acids. Catalyzes the dehydration of (2R,3R)-2,3-dihydroxy-3-methylpentanoate (2,3-dihydroxy-3-methylvalerate) into 2-oxo-3-methylpentanoate (2-oxo-3-methylvalerate) and of (2R)-2,3-dihydroxy-3-methylbutanoate (2,3-dihydroxyisovalerate) into 2-oxo-3-methylbutanoate (2-oxoisovalerate), the penultimate precursor to L-isoleucine and L-valine, respectively. The chain is Dihydroxy-acid dehydratase from Rippkaea orientalis (strain PCC 8801 / RF-1) (Cyanothece sp. (strain PCC 8801)).